A 283-amino-acid chain; its full sequence is Urease accessory protein UreD (283 aa).

The protein belongs to the UreD family. UreD, UreF and UreG form a complex that acts as a GTP-hydrolysis-dependent molecular chaperone, activating the urease apoprotein by helping to assemble the nickel containing metallocenter of UreC. The UreE protein probably delivers the nickel.

Its subcellular location is the cytoplasm. In terms of biological role, required for maturation of urease via the functional incorporation of the urease nickel metallocenter. The chain is Urease accessory protein UreD from Rhodopseudomonas palustris (strain BisB5).